The following is a 132-amino-acid chain: Large ribosomal subunit protein uL14 (132 aa).

This sequence belongs to the universal ribosomal protein uL14 family. In terms of assembly, part of the 50S ribosomal subunit. Forms a cluster with proteins L3 and L24e, part of which may contact the 16S rRNA in 2 intersubunit bridges.

Binds to 23S rRNA. Forms part of two intersubunit bridges in the 70S ribosome. In Methanocaldococcus jannaschii (strain ATCC 43067 / DSM 2661 / JAL-1 / JCM 10045 / NBRC 100440) (Methanococcus jannaschii), this protein is Large ribosomal subunit protein uL14.